A 159-amino-acid chain; its full sequence is Transcription elongation factor GreA (159 aa).

A coiled-coil region spans residues 45–67; that stretch reads NAEYHEARKEQSFVEGKIRELQL.

The protein belongs to the GreA/GreB family.

Necessary for efficient RNA polymerase transcription elongation past template-encoded arresting sites. The arresting sites in DNA have the property of trapping a certain fraction of elongating RNA polymerases that pass through, resulting in locked ternary complexes. Cleavage of the nascent transcript by cleavage factors such as GreA or GreB allows the resumption of elongation from the new 3'terminus. GreA releases sequences of 2 to 3 nucleotides. The protein is Transcription elongation factor GreA of Neorickettsia sennetsu (strain ATCC VR-367 / Miyayama) (Ehrlichia sennetsu).